The chain runs to 404 residues: Probable mannosyltransferase KTR3 (404 aa).

At 1–27 the chain is on the cytoplasmic side; the sequence is MSVHHKKKLMPKSALLIRKYQKGIRSS. A helical; Signal-anchor for type II membrane protein membrane pass occupies residues 28–44; it reads FIGLIIVLSFLFFMSGS. The tract at residues 45-83 is stem region; sequence RSPEVPIAQGTSVSRVASKDYLMPFTDKSQGVIHPVDDG. Over 45 to 404 the chain is Lumenal; sequence RSPEVPIAQG…AGNYKLPPGI (360 aa). The interval 84-404 is catalytic; that stretch reads KKEKGVMVTL…AGNYKLPPGI (321 aa). Glutamate 295 functions as the Nucleophile in the catalytic mechanism.

The protein belongs to the glycosyltransferase 15 family. In terms of assembly, interacts with SVP26.

It is found in the membrane. Its function is as follows. Possible glycosyltransferase that transfers an alpha-D-mannosyl residue from GDP-mannose into lipid-linked oligosaccharide, forming an alpha-(1-&gt;2)-D-mannosyl-D-mannose linkage. The sequence is that of Probable mannosyltransferase KTR3 (KTR3) from Saccharomyces cerevisiae (strain ATCC 204508 / S288c) (Baker's yeast).